A 547-amino-acid polypeptide reads, in one-letter code: Cytochrome P450 monooxygenase oblB (547 aa).

2 consecutive transmembrane segments (helical) span residues 42–62 and 242–262; these read GAVG…RLFL and FDMF…PWLI. A glycan (N-linked (GlcNAc...) asparagine) is linked at Asn277. Residues 345 to 365 form a helical membrane-spanning segment; the sequence is VLIGSGTMTTAGTMGFLCYYI. Residue Cys489 participates in heme binding.

Belongs to the cytochrome P450 family. Heme serves as cofactor.

The protein localises to the membrane. It carries out the reaction ophiobolin F + 4 reduced [NADPH--hemoprotein reductase] + 4 O2 = ophiobolin C + 4 oxidized [NADPH--hemoprotein reductase] + 6 H2O + 4 H(+). The protein operates within secondary metabolite biosynthesis; terpenoid biosynthesis. Cytochrome P450 monooxygenase; part of the gene cluster that mediates the biosynthesis of the sesterterpenes ophiobolins, fungal phytotoxins with potential anti-cancer activities. The first step of the pathway is performed by the sesterterpene synthase oblA that possesses both prenyl transferase and terpene cyclase activity, converting isopentenyl diphosphate and dimethylallyl diphosphate into geranylfarnesyl diphosphate (GFPP) and further converting GFPP into ophiobolin F, respectively. Other sesterterpenoids (C(25) terpenoids) are found as minor products of oblA. The cytochrome P450 monooxygenase oblB then catalyzes a four-step oxidative transformation of ophiobolin F to yield ophiobolin C. The function of the cytochrome P450 monooxygenase oblE has still to be determined. In Emericella variicolor (Aspergillus stellatus), this protein is Cytochrome P450 monooxygenase oblB.